The following is a 157-amino-acid chain: Transcriptional repressor NrdR (157 aa).

Residues 3-34 (CSNCQNKNTKVLDSRPIEEGRAIRRRRECERC) fold into a zinc finger. One can recognise an ATP-cone domain in the interval 49-139 (LIVVKKDGVR…VYRQFKDITV (91 aa)).

Belongs to the NrdR family. Zn(2+) is required as a cofactor.

In terms of biological role, negatively regulates transcription of bacterial ribonucleotide reductase nrd genes and operons by binding to NrdR-boxes. The chain is Transcriptional repressor NrdR from Oceanobacillus iheyensis (strain DSM 14371 / CIP 107618 / JCM 11309 / KCTC 3954 / HTE831).